The following is a 423-amino-acid chain: Lipoyl synthase 1, mitochondrial (423 aa).

Cys-127, Cys-132, Cys-138, Cys-159, Cys-163, Cys-166, and Ser-375 together coordinate [4Fe-4S] cluster. The Radical SAM core domain occupies 142-364 (DEEEGTATAT…EEEAMAMGFL (223 aa)).

It belongs to the radical SAM superfamily. Lipoyl synthase family. The cofactor is [4Fe-4S] cluster.

It is found in the mitochondrion. The catalysed reaction is [[Fe-S] cluster scaffold protein carrying a second [4Fe-4S](2+) cluster] + N(6)-octanoyl-L-lysyl-[protein] + 2 oxidized [2Fe-2S]-[ferredoxin] + 2 S-adenosyl-L-methionine + 4 H(+) = [[Fe-S] cluster scaffold protein] + N(6)-[(R)-dihydrolipoyl]-L-lysyl-[protein] + 4 Fe(3+) + 2 hydrogen sulfide + 2 5'-deoxyadenosine + 2 L-methionine + 2 reduced [2Fe-2S]-[ferredoxin]. Its pathway is protein modification; protein lipoylation via endogenous pathway; protein N(6)-(lipoyl)lysine from octanoyl-[acyl-carrier-protein]: step 2/2. Functionally, catalyzes the radical-mediated insertion of two sulfur atoms into the C-6 and C-8 positions of the octanoyl moiety bound to the lipoyl domains of lipoate-dependent enzymes, thereby converting the octanoylated domains into lipoylated derivatives. The polypeptide is Lipoyl synthase 1, mitochondrial (Trypanosoma cruzi (strain CL Brener)).